The primary structure comprises 205 residues: uncharacterized protein (205 aa).

A coiled-coil region spans residues 10-75 (QDLLSAVDQQ…AANLMTVMTD (66 aa)). The segment at 111–138 (PLSNTNNEQTSPPASGKTSETPKKNPTN) is disordered. A compositionally biased stretch (polar residues) spans 112 to 138 (LSNTNNEQTSPPASGKTSETPKKNPTN).

Belongs to the asfivirus K205R family.

It localises to the host cytoplasm. Its function is as follows. Induces host endoplasmic reticulum stress and consequently activates autophagy and NF-kappa-B signaling pathway. In turn, may induce autophagy-mediated STING1 degradation and innate immune evasion. This is an uncharacterized protein from Ornithodoros (relapsing fever ticks).